Consider the following 478-residue polypeptide: Ribulose bisphosphate carboxylase large chain (478 aa).

The propeptide occupies 1 to 2 (MS). Substrate contacts are provided by Asn123 and Thr173. Lys175 (proton acceptor) is an active-site residue. Lys177 is a substrate binding site. Residues Lys201, Asp203, and Glu204 each contribute to the Mg(2+) site. Lys201 carries the N6-carboxylysine modification. Ser208 is modified (phosphoserine). The active-site Proton acceptor is His294. Substrate contacts are provided by Arg295 and His327. A Phosphothreonine modification is found at Thr330. Residue Ser379 coordinates substrate.

The protein belongs to the RuBisCO large chain family. Type I subfamily. Heterohexadecamer of 8 large chains and 8 small chains; disulfide-linked. The disulfide link is formed within the large subunit homodimers. Mg(2+) is required as a cofactor. Post-translationally, the disulfide bond which can form in the large chain dimeric partners within the hexadecamer appears to be associated with oxidative stress and protein turnover.

The protein localises to the plastid. The protein resides in the chloroplast. It catalyses the reaction 2 (2R)-3-phosphoglycerate + 2 H(+) = D-ribulose 1,5-bisphosphate + CO2 + H2O. The catalysed reaction is D-ribulose 1,5-bisphosphate + O2 = 2-phosphoglycolate + (2R)-3-phosphoglycerate + 2 H(+). Functionally, ruBisCO catalyzes two reactions: the carboxylation of D-ribulose 1,5-bisphosphate, the primary event in carbon dioxide fixation, as well as the oxidative fragmentation of the pentose substrate in the photorespiration process. Both reactions occur simultaneously and in competition at the same active site. The polypeptide is Ribulose bisphosphate carboxylase large chain (Lepidium virginicum (Virginia pepperweed)).